A 400-amino-acid polypeptide reads, in one-letter code: Ribose-phosphate pyrophosphokinase 2, chloroplastic (400 aa).

A chloroplast-targeting transit peptide spans 1-44 (MASLALTSPPSVKIPSYLSSSSSSLFSRSSISFRTTESRSRICV). Mg(2+) is bound by residues D214, H216, D225, and D229. Positions 300–315 (GKVAVMVDDIIDTAGT) are binding of phosphoribosylpyrophosphate.

Belongs to the ribose-phosphate pyrophosphokinase family.

It is found in the plastid. It localises to the chloroplast. The catalysed reaction is D-ribose 5-phosphate + ATP = 5-phospho-alpha-D-ribose 1-diphosphate + AMP + H(+). The polypeptide is Ribose-phosphate pyrophosphokinase 2, chloroplastic (PRS2) (Arabidopsis thaliana (Mouse-ear cress)).